A 382-amino-acid polypeptide reads, in one-letter code: Biotin synthase (382 aa).

The region spanning C83–R318 is the Radical SAM core domain. Residues C101, C105, and C108 each contribute to the [4Fe-4S] cluster site. C146, C183, C243, and R313 together coordinate [2Fe-2S] cluster.

It belongs to the radical SAM superfamily. Biotin synthase family. In terms of assembly, homodimer. Requires [4Fe-4S] cluster as cofactor. [2Fe-2S] cluster is required as a cofactor.

It catalyses the reaction (4R,5S)-dethiobiotin + (sulfur carrier)-SH + 2 reduced [2Fe-2S]-[ferredoxin] + 2 S-adenosyl-L-methionine = (sulfur carrier)-H + biotin + 2 5'-deoxyadenosine + 2 L-methionine + 2 oxidized [2Fe-2S]-[ferredoxin]. The protein operates within cofactor biosynthesis; biotin biosynthesis; biotin from 7,8-diaminononanoate: step 2/2. Catalyzes the conversion of dethiobiotin (DTB) to biotin by the insertion of a sulfur atom into dethiobiotin via a radical-based mechanism. The sequence is that of Biotin synthase from Crocosphaera subtropica (strain ATCC 51142 / BH68) (Cyanothece sp. (strain ATCC 51142)).